Reading from the N-terminus, the 261-residue chain is Cytochrome c oxidase subunit 3 (261 aa).

The Mitochondrial matrix segment spans residues 1 to 15 (MAHQAHAYHMVDPSP). The chain crosses the membrane as a helical span at residues 16–34 (WPLTGAIAALLLTSGTAVW). The Mitochondrial intermembrane segment spans residues 35–40 (FHFHSL). The chain crosses the membrane as a helical span at residues 41–66 (TLLTLGNILLLLTMYQWWRDIIREGT). At 67-72 (FQGHHT) the chain is on the mitochondrial matrix side. The helical transmembrane segment at 73–105 (PPVQKGLRYGMILFITSEVFFFLGFFWAFYHAS) threads the bilayer. Residues 106 to 128 (LAPTPELGGCWPPAGITTLDPFE) are Mitochondrial intermembrane-facing. Residues 129–152 (VPLLNTAVLLASGVTVTWAHHSIM) traverse the membrane as a helical segment. Residues 153-155 (EGE) lie on the Mitochondrial matrix side of the membrane. The helical transmembrane segment at 156 to 183 (RKQTIQALTLTILLGFYFTFLQGMEYYE) threads the bilayer. At 184-190 (APFTIAD) the chain is on the mitochondrial intermembrane side. Residues 191–223 (GVYGSTFFVATGFHGLHVIIGSTFLAVCLLRQV) traverse the membrane as a helical segment. Over 224–232 (QYHFTSEHH) the chain is Mitochondrial matrix. A helical transmembrane segment spans residues 233–256 (FGFEAAAWYWHFVDVVWLFLYVSI). The Mitochondrial intermembrane segment spans residues 257 to 261 (YWWGS).

This sequence belongs to the cytochrome c oxidase subunit 3 family. In terms of assembly, component of the cytochrome c oxidase (complex IV, CIV), a multisubunit enzyme composed of 14 subunits. The complex is composed of a catalytic core of 3 subunits MT-CO1, MT-CO2 and MT-CO3, encoded in the mitochondrial DNA, and 11 supernumerary subunits COX4I, COX5A, COX5B, COX6A, COX6B, COX6C, COX7A, COX7B, COX7C, COX8 and NDUFA4, which are encoded in the nuclear genome. The complex exists as a monomer or a dimer and forms supercomplexes (SCs) in the inner mitochondrial membrane with NADH-ubiquinone oxidoreductase (complex I, CI) and ubiquinol-cytochrome c oxidoreductase (cytochrome b-c1 complex, complex III, CIII), resulting in different assemblies (supercomplex SCI(1)III(2)IV(1) and megacomplex MCI(2)III(2)IV(2)).

Its subcellular location is the mitochondrion inner membrane. It catalyses the reaction 4 Fe(II)-[cytochrome c] + O2 + 8 H(+)(in) = 4 Fe(III)-[cytochrome c] + 2 H2O + 4 H(+)(out). Functionally, component of the cytochrome c oxidase, the last enzyme in the mitochondrial electron transport chain which drives oxidative phosphorylation. The respiratory chain contains 3 multisubunit complexes succinate dehydrogenase (complex II, CII), ubiquinol-cytochrome c oxidoreductase (cytochrome b-c1 complex, complex III, CIII) and cytochrome c oxidase (complex IV, CIV), that cooperate to transfer electrons derived from NADH and succinate to molecular oxygen, creating an electrochemical gradient over the inner membrane that drives transmembrane transport and the ATP synthase. Cytochrome c oxidase is the component of the respiratory chain that catalyzes the reduction of oxygen to water. Electrons originating from reduced cytochrome c in the intermembrane space (IMS) are transferred via the dinuclear copper A center (CU(A)) of subunit 2 and heme A of subunit 1 to the active site in subunit 1, a binuclear center (BNC) formed by heme A3 and copper B (CU(B)). The BNC reduces molecular oxygen to 2 water molecules using 4 electrons from cytochrome c in the IMS and 4 protons from the mitochondrial matrix. This Oncorhynchus mykiss (Rainbow trout) protein is Cytochrome c oxidase subunit 3 (mt-co3).